Here is a 70-residue protein sequence, read N- to C-terminus: Small ribosomal subunit protein bS21 (70 aa).

It belongs to the bacterial ribosomal protein bS21 family.

The chain is Small ribosomal subunit protein bS21 from Helicobacter acinonychis (strain Sheeba).